We begin with the raw amino-acid sequence, 792 residues long: Phenylalanine--tRNA ligase beta subunit (792 aa).

The tRNA-binding domain occupies Ala39–Arg150. The region spanning Pro405–Ala480 is the B5 domain. The Mg(2+) site is built by Asp458, Asp464, Glu467, and Glu468. The FDX-ACB domain occupies Ser698 to Arg791.

It belongs to the phenylalanyl-tRNA synthetase beta subunit family. Type 1 subfamily. In terms of assembly, tetramer of two alpha and two beta subunits. It depends on Mg(2+) as a cofactor.

It localises to the cytoplasm. It carries out the reaction tRNA(Phe) + L-phenylalanine + ATP = L-phenylalanyl-tRNA(Phe) + AMP + diphosphate + H(+). The polypeptide is Phenylalanine--tRNA ligase beta subunit (Nitrosospira multiformis (strain ATCC 25196 / NCIMB 11849 / C 71)).